Reading from the N-terminus, the 715-residue chain is MDLTLSRADYLQVGVTSQKTMKLLPTSRQRATQKVVVGDQDGVVICFGVKKGEAVPVFKTLPGQKISRLELGGAVNTPQEKIFIAAGSEIRGFTKRGKQFLSFETNLTESIKAMYISGSDLFLSASYIYNHYCDCKDQNYYLSGDKINDVICLPVEKLSRVTPVLACQDRVLRVLQGSDVMYEIEVPGPPTVLALHNGDGGDSGEGLLFGTSDGRLGLIQITTSKPIHKWEIRNDKKRGGILCVDSFDIMGDGVKDLLVGRDDGMVEVYSFENANEPVLRFDQMLSESVTSIQGGCVGKDGYDEIVLATYSGWVTGLTTEPTHKESGPGEELKLNQEMQNKISSLRSEIEHLQFKVLQERENYQQSSQSSQAKSTVPSFSINDKFTLNKEDASYSLVLEVRTAIDNVLIQSDVPIDLLDVDKNSAVVSFSSCDTESNDNFLLATYRCQANTTRLELKIRSIEGQYGTLQAYVTPRIQPKTCQVRQYHIKPLSLHQRTHFIDHDRPMNTLTLTGQFSFAEVHSWVVFCLPEVPEKPPAGECATFYFQNTFLDTQLECVYRKGEGVFKSDNISTISILKDVLSKEATKRKINLNISYEINEVSVKHTLKLIHPKLEYQLLLAKKVQLIDALKELQVHEGNTDFLTPEYRCILEEADHLQEEYKKQPAHLERLYGMITDLFIDKFKFKGTNVKTKVPMLLEILDSYDQNTLISFFDAA.

At Met-1 the chain carries N-acetylmethionine.

In terms of assembly, part of BBSome complex, that contains BBS1, BBS2, BBS4, BBS5, BBS7, BBS8/TTC8, BBS9 and BBIP10. Interacts with BBS2 (via C-terminus). Interacts with CCDC28B. Interacts with SMO; the interaction is indicative for the association of SMO with the BBsome complex to facilitate ciliary localization of SMO.

The protein localises to the cell projection. The protein resides in the cilium membrane. It localises to the cytoplasm. It is found in the cytoskeleton. Its subcellular location is the microtubule organizing center. The protein localises to the centrosome. The protein resides in the centriolar satellite. It localises to the cilium basal body. Its function is as follows. The BBSome complex is thought to function as a coat complex required for sorting of specific membrane proteins to the primary cilia. The BBSome complex is required for ciliogenesis but is dispensable for centriolar satellite function. This ciliogenic function is mediated in part by the Rab8 GDP/GTP exchange factor, which localizes to the basal body and contacts the BBSome. Rab8(GTP) enters the primary cilium and promotes extension of the ciliary membrane. Firstly the BBSome associates with the ciliary membrane and binds to RAB3IP/Rabin8, the guanosyl exchange factor (GEF) for Rab8 and then the Rab8-GTP localizes to the cilium and promotes docking and fusion of carrier vesicles to the base of the ciliary membrane. The BBSome complex, together with the LTZL1, controls SMO ciliary trafficking and contributes to the sonic hedgehog (SHH) pathway regulation. Required for BBSome complex ciliary localization but not for the proper complex assembly. This is BBSome complex member BBS7 (Bbs7) from Mus musculus (Mouse).